Consider the following 1197-residue polypeptide: DExH-box ATP-dependent RNA helicase DExH3 (1197 aa).

A Helicase ATP-binding domain is found at 309–476 (LKAIAANQVV…FGGAPAMHIP (168 aa)). An ATP-binding site is contributed by 322-329 (GETGCGKT). Residues 423 to 426 (DEIH) carry the DEIH box motif. The 175-residue stretch at 564–738 (LIENVLCHIV…SLCLQIKSLG (175 aa)) folds into the Helicase C-terminal domain.

The protein belongs to the DExH box helicase family.

The catalysed reaction is ATP + H2O = ADP + phosphate + H(+). This Arabidopsis thaliana (Mouse-ear cress) protein is DExH-box ATP-dependent RNA helicase DExH3.